Consider the following 584-residue polypeptide: Pescadillo homolog (584 aa).

The tract at residues 1–54 (MGGLEKKKYERGSATNYITRNKARKKLQLSLPDFRRLCILKGIYPHEPKHKKKV) is required for 28S ribosomal RNA processing. A sufficient for nucleolar localization region spans residues 1–257 (MGGLEKKKYE…PKLEGQAQAE (257 aa)). K98 is subject to N6-acetyllysine. A sufficient for interaction with MAP1B region spans residues 312–414 (RKKELEAQEK…LLLPVAEYFP (103 aa)). Positions 321 to 414 (KHKKLFEGLK…LLLPVAEYFP (94 aa)) constitute a BRCT domain. The segment at 449–510 (DPGHLEEEEE…EEKKPQVMAG (62 aa)) is disordered. Residues 454–489 (EEEEEEDEDDDNEGDVAAENEEEDVEVESEEEEEEE) show a composition bias toward acidic residues. Positions 496–505 (EQHRLEEKKP) are enriched in basic and acidic residues. A Glycyl lysine isopeptide (Lys-Gly) (interchain with G-Cter in SUMO1); alternate cross-link involves residue K513. K513 participates in a covalent cross-link: Glycyl lysine isopeptide (Lys-Gly) (interchain with G-Cter in SUMO2); alternate. The required for 28S ribosomal RNA processing stretch occupies residues 535–584 (MMKKREKYLYQKIMFGKRRKIREANKLAEKRKAHDDAVRSEKKAKRTRPV). Residues 560–575 (KLAEKRKAHDDAVRSE) are compositionally biased toward basic and acidic residues. A disordered region spans residues 560–584 (KLAEKRKAHDDAVRSEKKAKRTRPV).

This sequence belongs to the pescadillo family. As to quaternary structure, component of the PeBoW complex, composed of BOP1, PES1 and WDR12. The complex is held together by BOP1, which interacts with PES1 via its N-terminal domain and with WDR12 via a high-affinity interaction between the seven-bladed beta-propeller domains of the 2 proteins. The PeBoW complex associates with the 66S pre-ribosome. The PeBoW complex also associates with DDX27, PES1 interacts directly with DDX27. Interacts with IRS1 and UBTF. May interact with MAP1B. Post-translationally, sumoylated. As to expression, ubiquitous. Highest levels appear to be found in tissues that contain a population of proliferating cells, such as ovary and testis. Also appears to be highly expressed in kidney and liver. In the brain expression is restricted to neural progenitor cells and postmitotic neurons. Highly expressed in malignant astrocytes.

Its subcellular location is the nucleus. The protein localises to the nucleolus. The protein resides in the nucleoplasm. It localises to the chromosome. In terms of biological role, component of the PeBoW complex, which is required for maturation of 28S and 5.8S ribosomal RNAs and formation of the 60S ribosome. The sequence is that of Pescadillo homolog (Pes1) from Mus musculus (Mouse).